Consider the following 319-residue polypeptide: Acetyl-coenzyme A carboxylase carboxyl transferase subunit alpha (319 aa).

The 262-residue stretch at 35–296 (NLDEEVQRLR…KAQLLADLAD (262 aa)) folds into the CoA carboxyltransferase C-terminal domain.

This sequence belongs to the AccA family. In terms of assembly, acetyl-CoA carboxylase is a heterohexamer composed of biotin carboxyl carrier protein (AccB), biotin carboxylase (AccC) and two subunits each of ACCase subunit alpha (AccA) and ACCase subunit beta (AccD).

It localises to the cytoplasm. The catalysed reaction is N(6)-carboxybiotinyl-L-lysyl-[protein] + acetyl-CoA = N(6)-biotinyl-L-lysyl-[protein] + malonyl-CoA. It participates in lipid metabolism; malonyl-CoA biosynthesis; malonyl-CoA from acetyl-CoA: step 1/1. Its function is as follows. Component of the acetyl coenzyme A carboxylase (ACC) complex. First, biotin carboxylase catalyzes the carboxylation of biotin on its carrier protein (BCCP) and then the CO(2) group is transferred by the carboxyltransferase to acetyl-CoA to form malonyl-CoA. The sequence is that of Acetyl-coenzyme A carboxylase carboxyl transferase subunit alpha from Erwinia tasmaniensis (strain DSM 17950 / CFBP 7177 / CIP 109463 / NCPPB 4357 / Et1/99).